Consider the following 309-residue polypeptide: Probable lipid kinase YegS-like (309 aa).

In terms of domain architecture, DAGKc spans 1 to 134; it reads MTTPRWRLIL…IDLLRVDADG (134 aa). ATP-binding positions include T39, 65 to 71, and T96; that span reads GDGTLSA. Mg(2+) is bound by residues L219, D222, and L224. The Proton acceptor role is filled by E280.

Belongs to the diacylglycerol/lipid kinase family. YegS lipid kinase subfamily. Mg(2+) is required as a cofactor. The cofactor is Ca(2+).

The protein resides in the cytoplasm. In terms of biological role, probably phosphorylates lipids; the in vivo substrate is unknown. This Stenotrophomonas maltophilia (strain K279a) protein is Probable lipid kinase YegS-like.